Here is a 158-residue protein sequence, read N- to C-terminus: MGVGGTLEYISELIGNGGSHSYGKRKKKKQFQTVELKVRMDCDGCVLKIKNSLSSLKGVKTVEINKKQQKVTVSGYADASKVLKKAKATGKKAEIWPYVPYNLVAQPYIAQAYDKKAPPGYVRKVDPNVTTGTMAVYYDDPSYTSLFSDDNPNACSIM.

The region spanning 31 to 94 (FQTVELKVRM…KAKATGKKAE (64 aa)) is the HMA domain. The a metal cation site is built by cysteine 42 and cysteine 45. Position 155 is a cysteine methyl ester (cysteine 155). Cysteine 155 carries the S-farnesyl cysteine lipid modification. Positions 156–158 (SIM) are cleaved as a propeptide — removed in mature form.

It belongs to the HIPP family. In terms of assembly, interacts with ZHD11/HB29.

In terms of biological role, heavy-metal-binding protein. The chain is Heavy metal-associated isoprenylated plant protein 23 from Arabidopsis thaliana (Mouse-ear cress).